The primary structure comprises 256 residues: 6-carboxyhexanoate--CoA ligase (256 aa).

This sequence belongs to the BioW family. As to quaternary structure, homodimer. It depends on Mg(2+) as a cofactor.

It carries out the reaction heptanedioate + ATP + CoA = 6-carboxyhexanoyl-CoA + AMP + diphosphate. The protein operates within metabolic intermediate metabolism; pimeloyl-CoA biosynthesis; pimeloyl-CoA from pimelate: step 1/1. Catalyzes the transformation of pimelate into pimeloyl-CoA with concomitant hydrolysis of ATP to AMP. This is 6-carboxyhexanoate--CoA ligase from Methanobrevibacter ruminantium (strain ATCC 35063 / DSM 1093 / JCM 13430 / OCM 146 / M1) (Methanobacterium ruminantium).